A 114-amino-acid chain; its full sequence is MMAIFISIVLVVSFVLFNRVQAKKSIYNYIARQGIQESQLKYIDFHKDFKMGGYWLAVYVEGENPDIYYEYSYQDKKVNFQAYFNSEKAIKKKMWGGSGLTEIEMKKLKYPPLQ.

Functionally, possibly involved in pGI2 replication mechanism. This is an uncharacterized protein from Bacillus thuringiensis.